Reading from the N-terminus, the 139-residue chain is Small ribosomal subunit protein uS11 (139 aa).

Disordered regions lie at residues 1 to 33 (MPPA…AAHI) and 118 to 139 (GAIS…RRRV). Residues 14–23 (KGQKTRRREK) are compositionally biased toward basic residues.

This sequence belongs to the universal ribosomal protein uS11 family. In terms of assembly, part of the 30S ribosomal subunit. Interacts with proteins S7 and S18. Binds to IF-3.

Its function is as follows. Located on the platform of the 30S subunit, it bridges several disparate RNA helices of the 16S rRNA. Forms part of the Shine-Dalgarno cleft in the 70S ribosome. The sequence is that of Small ribosomal subunit protein uS11 from Mycobacterium tuberculosis (strain ATCC 25177 / H37Ra).